The sequence spans 126 residues: RuBisCO chaperone RbcX (126 aa).

The protein belongs to the RbcX family. Homodimer. Interacts with the exposed C-terminal peptide of RbcL via its central cleft, contacts a second RbcL monomer via its peripheral polar surface.

Its subcellular location is the carboxysome. It localises to the cytoplasm. An RbcL-specific chaperone. Required for assembly of the RbcL8 core. The central cleft of the RbcX homodimer (RbcX2) binds the C-terminus of a RbcL monomer, stabilizing the C-terminus and probably preventing its reassociation with chaperonin GroEL-ES. At the same time the peripheral region of RbcX2 binds a second RbcL monomer, bridging the RbcL homodimers in the correct orientation. The RbcX2(2)-bound RbcL dimers then assemble into the RbcL8 core (RbcL8-(RbcX2)8). RbcS binding triggers the release of RbcX2. This is RuBisCO chaperone RbcX from Thermosynechococcus vestitus (strain NIES-2133 / IAM M-273 / BP-1).